A 307-amino-acid chain; its full sequence is Ribonuclease Z (307 aa).

Positions 63, 65, 67, 68, 141, 208, and 266 each coordinate Zn(2+). Asp-67 functions as the Proton acceptor in the catalytic mechanism.

The protein belongs to the RNase Z family. Homodimer. Zn(2+) serves as cofactor.

It catalyses the reaction Endonucleolytic cleavage of RNA, removing extra 3' nucleotides from tRNA precursor, generating 3' termini of tRNAs. A 3'-hydroxy group is left at the tRNA terminus and a 5'-phosphoryl group is left at the trailer molecule.. In terms of biological role, zinc phosphodiesterase, which displays some tRNA 3'-processing endonuclease activity. Probably involved in tRNA maturation, by removing a 3'-trailer from precursor tRNA. The protein is Ribonuclease Z of Chlamydia pneumoniae (Chlamydophila pneumoniae).